The primary structure comprises 201 residues: Proteasome subunit beta type-2 (201 aa).

Position 1 is an N-acetylmethionine (methionine 1).

This sequence belongs to the peptidase T1B family. In terms of assembly, the 26S proteasome consists of a 20S proteasome core and two 19S regulatory subunits. The 20S proteasome core is a barrel-shaped complex made of 28 subunits that are arranged in four stacked rings. The two outer rings are each formed by seven alpha subunits, and the two inner rings are formed by seven beta subunits. The proteolytic activity is exerted by three beta-subunits PSMB5, PSMB6 and PSMB7. Detected in liver (at protein level).

It localises to the cytoplasm. The protein resides in the nucleus. Functionally, non-catalytic component of the 20S core proteasome complex involved in the proteolytic degradation of most intracellular proteins. This complex plays numerous essential roles within the cell by associating with different regulatory particles. Associated with two 19S regulatory particles, forms the 26S proteasome and thus participates in the ATP-dependent degradation of ubiquitinated proteins. The 26S proteasome plays a key role in the maintenance of protein homeostasis by removing misfolded or damaged proteins that could impair cellular functions, and by removing proteins whose functions are no longer required. Associated with the PA200 or PA28, the 20S proteasome mediates ubiquitin-independent protein degradation. This type of proteolysis is required in several pathways including spermatogenesis (20S-PA200 complex) or generation of a subset of MHC class I-presented antigenic peptides (20S-PA28 complex). The protein is Proteasome subunit beta type-2 (Psmb2) of Mus musculus (Mouse).